The following is a 115-amino-acid chain: Nucleoid-associated protein Ccel_0243 (115 aa).

The protein belongs to the YbaB/EbfC family. As to quaternary structure, homodimer.

The protein resides in the cytoplasm. It localises to the nucleoid. Functionally, binds to DNA and alters its conformation. May be involved in regulation of gene expression, nucleoid organization and DNA protection. This chain is Nucleoid-associated protein Ccel_0243, found in Ruminiclostridium cellulolyticum (strain ATCC 35319 / DSM 5812 / JCM 6584 / H10) (Clostridium cellulolyticum).